We begin with the raw amino-acid sequence, 295 residues long: Protein NEOXANTHIN-DEFICIENT 1 (295 aa).

The segment at 221 to 251 is disordered; the sequence is PAKVSGPSESDADKENSSEDQSSNVESVSRV.

In terms of biological role, required for neoxanthin biosynthesis. Probably not involved directly in the enzymatic conversion of violaxanthin to neoxanthin. Is necessary but not sufficient for neoxanthin synthesis. Seems not required for abscisic acid (ABA) biosynthesis in response to drought stress. The chain is Protein NEOXANTHIN-DEFICIENT 1 from Solanum lycopersicum (Tomato).